The following is a 296-amino-acid chain: Remorin 4.1 (296 aa).

Disordered regions lie at residues 1–78 (MLTL…SGEN), 121–142 (TRIG…DSNP), and 242–266 (EKTQ…EGKR). Positions 21 to 39 (ASDRRDETPSSEIVVRDIH) are enriched in basic and acidic residues. 2 stretches are compositionally biased toward polar residues: residues 41–53 (MTTT…PQQR) and 62–78 (PSRS…SGEN). Composition is skewed to basic and acidic residues over residues 121–135 (TRIG…HGQV) and 253–266 (RKAE…EGKR). Residues 226–261 (MKKIERKLEDRRAKAMEKTQNKVAKAQRKAEERRAT) adopt a coiled-coil conformation.

It belongs to the remorin family. In terms of assembly, forms homodimer and heterodimer with REM4.2. Interacts with KIN11. Phosphorylated by KIN11. In terms of processing, probably ubiquitinated and degraded by the 26S proteasome pathway. As to expression, predominantly detected in bud, stem, root, flower, silique, and leaves, and enhanced dramatically in senescence leaf.

The protein resides in the cell membrane. Functionally, collaborates with REM4.2 to positively regulate the BCTV and BSCTV susceptibility. The polypeptide is Remorin 4.1 (Arabidopsis thaliana (Mouse-ear cress)).